We begin with the raw amino-acid sequence, 339 residues long: N-acetyl-gamma-glutamyl-phosphate reductase (339 aa).

Cys-145 is a catalytic residue.

It belongs to the NAGSA dehydrogenase family. Type 1 subfamily.

It is found in the cytoplasm. It carries out the reaction N-acetyl-L-glutamate 5-semialdehyde + phosphate + NADP(+) = N-acetyl-L-glutamyl 5-phosphate + NADPH + H(+). It participates in amino-acid biosynthesis; L-arginine biosynthesis; N(2)-acetyl-L-ornithine from L-glutamate: step 3/4. Its function is as follows. Catalyzes the NADPH-dependent reduction of N-acetyl-5-glutamyl phosphate to yield N-acetyl-L-glutamate 5-semialdehyde. In Thermotoga petrophila (strain ATCC BAA-488 / DSM 13995 / JCM 10881 / RKU-1), this protein is N-acetyl-gamma-glutamyl-phosphate reductase.